Here is a 118-residue protein sequence, read N- to C-terminus: Non-specific lipid-transfer protein A (118 aa).

Positions M1–R25 are cleaved as a signal peptide. Cystine bridges form between C29–C76, C39–C53, C54–C100, and C74–C114.

This sequence belongs to the plant LTP family.

Functionally, plant non-specific lipid-transfer proteins transfer phospholipids as well as galactolipids across membranes. May play a role in wax or cutin deposition in the cell walls of expanding epidermal cells and certain secretory tissues. This is Non-specific lipid-transfer protein A (WAX9A) from Brassica oleracea var. italica (Broccoli).